The sequence spans 82 residues: Leucinostatins biosynthesis cluster protein M (82 aa).

The segment at 34–82 (ARNETHDPSGPRAPVSSMRLGPRSRPYHHGTARLRGSPNCSRDSSSAAT) is disordered. The span at 71-82 (PNCSRDSSSAAT) shows a compositional bias: polar residues.

Its function is as follows. Part of the gene cluster that mediates the biosynthesis of the lipopeptide antibiotics leucinostatins that show extensive biological activities, including antimalarial, antiviral, antibacterial, antifungal, and antitumor activities, as well as phytotoxic. The function of lcsM within the leucinostatins biosynthesis has not been identified yet. The polypeptide is Leucinostatins biosynthesis cluster protein M (Purpureocillium lilacinum (Paecilomyces lilacinus)).